The sequence spans 402 residues: Propionate kinase (402 aa).

ATP-binding residues include Asn-11 and Lys-18. Asn-11 lines the Mg(2+) pocket. Arg-86 lines the substrate pocket. Residue Asp-143 is the Proton donor/acceptor of the active site. ATP-binding positions include His-175, 203–207, 278–280, and 326–330; these read HLGNG, DLR, and GIGEN.

This sequence belongs to the acetokinase family. TdcD subfamily. Homodimer. Mg(2+) serves as cofactor.

It catalyses the reaction propanoate + ATP = propanoyl phosphate + ADP. Its pathway is amino-acid degradation; L-threonine degradation via propanoate pathway; propanoate from L-threonine: step 4/4. In terms of biological role, catalyzes the conversion of propionyl phosphate and ADP to propionate and ATP. This is Propionate kinase from Enterobacter sp. (strain 638).